We begin with the raw amino-acid sequence, 88 residues long: Small ribosomal subunit protein bS20 (88 aa).

Residues 1-20 form a disordered region; that stretch reads MANTAQARKRARQAVVQNAH.

The protein belongs to the bacterial ribosomal protein bS20 family.

Functionally, binds directly to 16S ribosomal RNA. This is Small ribosomal subunit protein bS20 from Ralstonia nicotianae (strain ATCC BAA-1114 / GMI1000) (Ralstonia solanacearum).